Reading from the N-terminus, the 452-residue chain is Mannan endo-1,6-alpha-mannosidase DCW1 (452 aa).

The N-terminal stretch at 1–18 is a signal peptide; the sequence is MKFSIYLIISLFSSFSHA. Residues Asn25, Asn81, Asn106, Asn130, Asn200, Asn237, Asn240, Asn262, Asn271, and Asn286 are each glycosylated (N-linked (GlcNAc...) asparagine). The GPI-anchor amidated glycine moiety is linked to residue Gly431. Positions 432–452 are cleaved as a propeptide — removed in mature form; sequence AGIITAIIGASLVGSCVWLIL.

It belongs to the glycosyl hydrolase 76 family.

The protein localises to the cell membrane. The catalysed reaction is Random hydrolysis of (1-&gt;6)-alpha-D-mannosidic linkages in unbranched (1-&gt;6)-mannans.. Functionally, probable mannosidase required for normal synthesis of the cell wall. The polypeptide is Mannan endo-1,6-alpha-mannosidase DCW1 (DCW1) (Candida albicans (strain SC5314 / ATCC MYA-2876) (Yeast)).